Consider the following 534-residue polypeptide: MFS transporter fmqE (534 aa).

The next 12 membrane-spanning stretches (helical) occupy residues 48–68 (LLLF…VCAS), 109–129 (LWTS…GFLA), 136–156 (WTAV…VFSS), 169–189 (GAVV…VAPI), 194–214 (ALLQ…LGIV), 228–248 (IVFG…FLVP), 326–346 (AIGV…GLNV), 349–369 (VFDI…LGWL), 379–399 (LWLW…ALGF), 407–427 (LAIA…TVGV), 447–467 (VAFI…PYMY), and 478–498 (TGFV…FLVP).

It belongs to the major facilitator superfamily. Sugar transporter (TC 2.A.1.1) family.

Its subcellular location is the cytoplasmic vesicle membrane. Its function is as follows. MFS transporter; part of the gene cluster that mediates the biosynthesis of the antitumor cytotoxic peptidyl alkaloids fumiquinazolines that confer a dual-usage capability to defend against phagocytes in the environment and animal hosts. Probably involved in fumiquinazolines metabolism and transport. This is MFS transporter fmqE from Aspergillus fumigatus (strain ATCC MYA-4609 / CBS 101355 / FGSC A1100 / Af293) (Neosartorya fumigata).